Reading from the N-terminus, the 136-residue chain is Heme-binding protein Rv0203 (136 aa).

The signal sequence occupies residues 1–27; it reads MKTGTATTRRRLLAVLIALALPGAAVA. A disulfide bridge links Cys-41 with Cys-115. The heme site is built by Tyr-60, His-64, and His-90.

As to quaternary structure, dimer of dimers.

The protein localises to the secreted. Functionally, part of a heme-iron acquisition system. Acts by binding heme and delivering it to the membrane proteins MmpL3 and MmpL11. Can use free heme or heme from host hemoglobin. This chain is Heme-binding protein Rv0203, found in Mycobacterium tuberculosis (strain ATCC 25618 / H37Rv).